A 193-amino-acid chain; its full sequence is Large ribosomal subunit protein bL25 (193 aa).

This sequence belongs to the bacterial ribosomal protein bL25 family. CTC subfamily. As to quaternary structure, part of the 50S ribosomal subunit; part of the 5S rRNA/L5/L18/L25 subcomplex. Contacts the 5S rRNA. Binds to the 5S rRNA independently of L5 and L18.

Functionally, this is one of the proteins that binds to the 5S RNA in the ribosome where it forms part of the central protuberance. In Clostridium tetani (strain Massachusetts / E88), this protein is Large ribosomal subunit protein bL25.